A 267-amino-acid chain; its full sequence is Small ribosomal subunit protein uS2 (267 aa).

The interval 222–267 (GKALRDQDSEEEIQNKEQDEVSQEEKDDILDEAMNEEDFEIPEDKE) is disordered. The segment covering 223–240 (KALRDQDSEEEIQNKEQD) has biased composition (basic and acidic residues). Residues 241-267 (EVSQEEKDDILDEAMNEEDFEIPEDKE) are compositionally biased toward acidic residues.

The protein belongs to the universal ribosomal protein uS2 family.

This Campylobacter hominis (strain ATCC BAA-381 / DSM 21671 / CCUG 45161 / LMG 19568 / NCTC 13146 / CH001A) protein is Small ribosomal subunit protein uS2.